The primary structure comprises 65 residues: Large ribosomal subunit protein bL33m (65 aa).

The N-terminal 8 residues, 1 to 8 (MLLSAVSF), are a transit peptide targeting the mitochondrion.

This sequence belongs to the bacterial ribosomal protein bL33 family. In terms of assembly, component of the mitochondrial ribosome large subunit (39S) which comprises a 16S rRNA and about 50 distinct proteins.

The protein resides in the mitochondrion. This Mus musculus (Mouse) protein is Large ribosomal subunit protein bL33m (Mrpl33).